A 351-amino-acid chain; its full sequence is Selenide, water dikinase (351 aa).

The active site involves U15. U15 is a non-standard amino acid (selenocysteine). Residues K18 and 47 to 49 each bind ATP; that span reads DNE. Position 50 (D50) interacts with Mg(2+). ATP is bound by residues D67, D90, and 138-140; that span reads GHS. A Mg(2+)-binding site is contributed by D90. D227 contributes to the Mg(2+) binding site.

The protein belongs to the selenophosphate synthase 1 family. Class I subfamily. In terms of assembly, homodimer. It depends on Mg(2+) as a cofactor.

The enzyme catalyses hydrogenselenide + ATP + H2O = selenophosphate + AMP + phosphate + 2 H(+). In terms of biological role, synthesizes selenophosphate from selenide and ATP. The sequence is that of Selenide, water dikinase from Nitratidesulfovibrio vulgaris (strain DP4) (Desulfovibrio vulgaris).